The sequence spans 117 residues: Prefoldin subunit beta (117 aa).

Belongs to the prefoldin subunit beta family. Heterohexamer of two alpha and four beta subunits.

It is found in the cytoplasm. Functionally, molecular chaperone capable of stabilizing a range of proteins. Seems to fulfill an ATP-independent, HSP70-like function in archaeal de novo protein folding. The chain is Prefoldin subunit beta (pfdB) from Methanosarcina acetivorans (strain ATCC 35395 / DSM 2834 / JCM 12185 / C2A).